A 134-amino-acid chain; its full sequence is Viral interleukin-8 homolog (134 aa).

An N-terminal signal peptide occupies residues methionine 1–glycine 22.

It belongs to the intercrine alpha (chemokine CxC) family. Homodimer.

The protein localises to the secreted. In terms of biological role, plays a role in the early phase of cytolytic infections presumably by recruiting host B or T-lymphocytes. The polypeptide is Viral interleukin-8 homolog (MDV078) (Gallus gallus (Chicken)).